The chain runs to 449 residues: Ribulose bisphosphate carboxylase large chain (449 aa).

Lys-7 is modified (N6,N6,N6-trimethyllysine). 2 residues coordinate substrate: Asn-116 and Thr-166. Residue Lys-168 is the Proton acceptor of the active site. Lys-170 contacts substrate. 3 residues coordinate Mg(2+): Lys-194, Asp-196, and Glu-197. Lys-194 is subject to N6-carboxylysine. The active-site Proton acceptor is the His-287. Residues Arg-288, His-320, and Ser-372 each coordinate substrate.

Belongs to the RuBisCO large chain family. Type I subfamily. In terms of assembly, heterohexadecamer of 8 large chains and 8 small chains; disulfide-linked. The disulfide link is formed within the large subunit homodimers. The cofactor is Mg(2+). In terms of processing, the disulfide bond which can form in the large chain dimeric partners within the hexadecamer appears to be associated with oxidative stress and protein turnover.

The protein resides in the plastid. Its subcellular location is the chloroplast. The catalysed reaction is 2 (2R)-3-phosphoglycerate + 2 H(+) = D-ribulose 1,5-bisphosphate + CO2 + H2O. The enzyme catalyses D-ribulose 1,5-bisphosphate + O2 = 2-phosphoglycolate + (2R)-3-phosphoglycerate + 2 H(+). Functionally, ruBisCO catalyzes two reactions: the carboxylation of D-ribulose 1,5-bisphosphate, the primary event in carbon dioxide fixation, as well as the oxidative fragmentation of the pentose substrate in the photorespiration process. Both reactions occur simultaneously and in competition at the same active site. The polypeptide is Ribulose bisphosphate carboxylase large chain (Aspidistra elatior (Cast-iron plant)).